We begin with the raw amino-acid sequence, 109 residues long: Flagellar hook-basal body complex protein FliE (109 aa).

The protein belongs to the FliE family.

It is found in the bacterial flagellum basal body. This Pseudomonas fluorescens (strain SBW25) protein is Flagellar hook-basal body complex protein FliE.